We begin with the raw amino-acid sequence, 251 residues long: HTH-type transcriptional regulator UlaR (251 aa).

Residues 3–58 enclose the HTH deoR-type domain; sequence EAQRHQILLEMLAQLGFVTVEKVVERLGISPATARRDINKLDESGKLKKVRNGAEA. The segment at residues 20 to 39 is a DNA-binding region (H-T-H motif); that stretch reads VTVEKVVERLGISPATARRD.

The protein resides in the cytoplasm. In terms of biological role, represses ulaG and the ulaABCDEF operon. The polypeptide is HTH-type transcriptional regulator UlaR (Escherichia coli O127:H6 (strain E2348/69 / EPEC)).